The sequence spans 123 residues: Intracellular iron chaperone frataxin (123 aa).

Homodimer, upon Fe(2+) binding. Interacts with the SufS/SufU complex. Interacts with CpfC. Requires Fe(2+) as cofactor.

It localises to the cytoplasm. In terms of biological role, plays an essential role in iron intracellular trafficking to iron cofactor biogenesis systems including iron-sulfur cluster (Fe-S) or heme assembly. Promotes the biosynthesis of iron-sulfur clusters by delivering Fe to the complex composed of the cysteine desulfurase SufS and the zinc-dependent sulfurtransferase SufU. Also plays a critical role in coproporphyrin-dependent heme b biogenesis and thus provides an essential function for the bacterial global metabolism. In Bacillus subtilis (strain 168), this protein is Intracellular iron chaperone frataxin (fra).